Consider the following 399-residue polypeptide: Chorismate synthase (399 aa).

Residues arginine 40 and arginine 46 each coordinate NADP(+). Residues 134 to 136 (RAS), 255 to 256 (QA), glycine 299, 314 to 318 (KPIST), and arginine 340 contribute to the FMN site.

The protein belongs to the chorismate synthase family. As to quaternary structure, homotetramer. FMNH2 serves as cofactor.

It carries out the reaction 5-O-(1-carboxyvinyl)-3-phosphoshikimate = chorismate + phosphate. The protein operates within metabolic intermediate biosynthesis; chorismate biosynthesis; chorismate from D-erythrose 4-phosphate and phosphoenolpyruvate: step 7/7. In terms of biological role, catalyzes the anti-1,4-elimination of the C-3 phosphate and the C-6 proR hydrogen from 5-enolpyruvylshikimate-3-phosphate (EPSP) to yield chorismate, which is the branch point compound that serves as the starting substrate for the three terminal pathways of aromatic amino acid biosynthesis. This reaction introduces a second double bond into the aromatic ring system. The polypeptide is Chorismate synthase (Mycolicibacterium smegmatis (strain ATCC 700084 / mc(2)155) (Mycobacterium smegmatis)).